Here is a 718-residue protein sequence, read N- to C-terminus: Ribosomal RNA large subunit methyltransferase K/L (718 aa).

A THUMP domain is found at 44-155 (DAYKVCIYSH…KQYVNVFLCL (112 aa)).

Belongs to the methyltransferase superfamily. RlmKL family.

The protein localises to the cytoplasm. The enzyme catalyses guanosine(2445) in 23S rRNA + S-adenosyl-L-methionine = N(2)-methylguanosine(2445) in 23S rRNA + S-adenosyl-L-homocysteine + H(+). It catalyses the reaction guanosine(2069) in 23S rRNA + S-adenosyl-L-methionine = N(2)-methylguanosine(2069) in 23S rRNA + S-adenosyl-L-homocysteine + H(+). Functionally, specifically methylates the guanine in position 2445 (m2G2445) and the guanine in position 2069 (m7G2069) of 23S rRNA. In Francisella philomiragia subsp. philomiragia (strain ATCC 25017 / CCUG 19701 / FSC 153 / O#319-036), this protein is Ribosomal RNA large subunit methyltransferase K/L.